Consider the following 387-residue polypeptide: Sorting nexin-7 (387 aa).

Residues 30-151 enclose the PX domain; the sequence is KDLFITVDAP…VFLTAQAEEL (122 aa). Arg73, Gln75, Lys103, and Arg117 together coordinate a 1,2-diacyl-sn-glycero-3-phospho-(1D-myo-inositol-3-phosphate). Residues 178–387 form the BAR domain; it reads GVKNRPEEFM…PSEEDSEEKL (210 aa).

It belongs to the sorting nexin family. In terms of assembly, heterodimer; heterodimerizes with SNX4.

It localises to the early endosome membrane. Involved in the regulation of endocytosis and in several stages of intracellular trafficking. Together with SNX4, involved in autophagosome assembly by regulating trafficking and recycling of phospholipid scramblase ATG9A. In Mus musculus (Mouse), this protein is Sorting nexin-7.